The sequence spans 300 residues: 4-hydroxy-tetrahydrodipicolinate synthase (300 aa).

A pyruvate-binding site is contributed by Thr-46. The Proton donor/acceptor role is filled by Tyr-134. The active-site Schiff-base intermediate with substrate is the Lys-162. Val-204 provides a ligand contact to pyruvate.

The protein belongs to the DapA family. Homotetramer; dimer of dimers.

It localises to the cytoplasm. The catalysed reaction is L-aspartate 4-semialdehyde + pyruvate = (2S,4S)-4-hydroxy-2,3,4,5-tetrahydrodipicolinate + H2O + H(+). Its pathway is amino-acid biosynthesis; L-lysine biosynthesis via DAP pathway; (S)-tetrahydrodipicolinate from L-aspartate: step 3/4. In terms of biological role, catalyzes the condensation of (S)-aspartate-beta-semialdehyde [(S)-ASA] and pyruvate to 4-hydroxy-tetrahydrodipicolinate (HTPA). The polypeptide is 4-hydroxy-tetrahydrodipicolinate synthase (Heliobacterium modesticaldum (strain ATCC 51547 / Ice1)).